The chain runs to 162 residues: Circumsporozoite protein-related antigen (162 aa).

The signal sequence occupies residues 1 to 16 (MKILSVFFLALFFIIF). 2 disordered regions span residues 24-44 (KTNKGTGSGVSSKKKNKKGSG) and 109-162 (PFKI…GPEH). The span at 114–130 (SSDPADNANPDADSESN) shows a compositional bias: low complexity. Positions 137 to 162 (PQVTAQDVTPEQPQGDDNNLVSGPEH) are enriched in polar residues.

In Plasmodium falciparum, this protein is Circumsporozoite protein-related antigen.